Reading from the N-terminus, the 366-residue chain is Pectinesterase A (366 aa).

A signal peptide spans 1–24 (MLKTISGTLALSLIIAASVHQAQA). The substrate site is built by Thr109 and Gln153. The active-site Proton donor is Asp178. Cys192 and Cys212 form a disulfide bridge. Asp199 functions as the Nucleophile in the catalytic mechanism. 6 residues coordinate substrate: Arg219, Asn226, Tyr230, Arg267, Trp269, and Thr272.

It belongs to the pectinesterase family. As to quaternary structure, monomer.

Its subcellular location is the secreted. It carries out the reaction [(1-&gt;4)-alpha-D-galacturonosyl methyl ester](n) + n H2O = [(1-&gt;4)-alpha-D-galacturonosyl](n) + n methanol + n H(+). It participates in glycan metabolism; pectin degradation; 2-dehydro-3-deoxy-D-gluconate from pectin: step 1/5. In terms of biological role, catalyzes the first step in maceration and soft-rotting of plant tissue. The protein is Pectinesterase A of Dickeya dadantii (strain 3937) (Erwinia chrysanthemi (strain 3937)).